Consider the following 59-residue polypeptide: Putative potassium channel toxin Ts25 (59 aa).

The signal sequence occupies residues 1–22 (MKAFYGILIIFILISMIHLSQQ). 3 disulfide bridges follow: C29/C50, C35/C55, and C39/C57.

This sequence belongs to the short scorpion toxin superfamily. Potassium channel inhibitor family. Alpha-KTx 04 subfamily. As to expression, expressed by the venom gland.

Its subcellular location is the secreted. In terms of biological role, potently blocks Kv1.1/KCNA1 (85%), Kv1.2/KCNA2 (91%), Kv1.3/KCNA3 (89%), Kv1.6/KCNA6 (94%), and Shaker (97%). In Tityus serrulatus (Brazilian scorpion), this protein is Putative potassium channel toxin Ts25.